The following is a 364-amino-acid chain: Caveolae-associated protein 4 (364 aa).

The segment at 1–24 (MEHNGSASNADKIHQNRLSSVTED) is disordered. A coiled-coil region spans residues 44-77 (VDSVQASQKRIEERHREMENAIKSVQIDLLKLSQ). Phosphoserine occurs at positions 172 and 173. Residues 202–226 (FSKENMQKTRQNLDKKVNRIRTRIV) are a coiled coil. Residues 231-256 (RERLRQSGERLRQSGERLRQSGERFK) show a composition bias toward basic and acidic residues. 2 disordered regions span residues 231 to 283 (RERL…RTVA) and 311 to 339 (SDEL…TPEP). A Phosphotyrosine modification is found at Tyr326. A Phosphothreonine modification is found at Thr336. Ser355 is modified (phosphoserine).

This sequence belongs to the CAVIN family. As to quaternary structure, component of the CAVIN complex composed of CAVIN1, CAVIN2, CAVIN3 and CAVIN4. Interacts with CAVIN1, ADRA1A and ADRA1B. Interacts with CAVIN2; this augments the transactivation of NPPA. Interacts with CAV3. Interacts with MAPK1 and MAPK3.

It is found in the cytoplasm. The protein resides in the myofibril. It localises to the sarcomere. Its subcellular location is the cytosol. The protein localises to the cell membrane. It is found in the sarcolemma. The protein resides in the membrane. It localises to the caveola. Its function is as follows. Modulates the morphology of formed caveolae in cardiomyocytes, but is not required for caveolar formation. Facilitates the recruitment of MAPK1/3 to caveolae within cardiomyocytes and regulates alpha-1 adrenergic receptor-induced hypertrophic responses in cardiomyocytes through MAPK1/3 activation. Contributes to proper membrane localization and stabilization of caveolin-3 (CAV3) in cardiomyocytes. Induces RHOA activation and activates NPPA transcription and myofibrillar organization through the Rho/ROCK signaling pathway. The sequence is that of Caveolae-associated protein 4 from Homo sapiens (Human).